The primary structure comprises 397 residues: Keratinocyte differentiation factor 1 (397 aa).

The segment covering 1–16 (MPRPGQPRPSSGPPRL) has biased composition (pro residues). 3 disordered regions span residues 1-67 (MPRP…SAEP), 130-158 (EHNGVPPSPDRAPPSRRDGQRLKTSMGSS), and 192-214 (LAEPPPTRHSLPSTFTNSPRGSE). Basic and acidic residues predominate over residues 44–55 (RPDPKDPGHHGP). Residues 201–211 (SLPSTFTNSPR) are compositionally biased toward polar residues. Ser218 bears the Phosphoserine mark. Disordered regions lie at residues 304–339 (ISTRKSRSRPQTSEGRSARSTAPAAAPDSGHETMLG) and 361–392 (ARKLRPYGAPGYPASQDSSFQGTDTDSSGAPL). Residues 321 to 330 (ARSTAPAAAP) are compositionally biased toward low complexity. The segment covering 375 to 388 (SQDSSFQGTDTDSS) has biased composition (polar residues).

The protein resides in the cytoplasm. Its subcellular location is the cell junction. Plays a role in the regulation of the epidermis formation during early development. Required both as an inhibitor of basal cell proliferation and a promoter of differentiation of basal progenitor cell progeny. This is Keratinocyte differentiation factor 1 (Kdf1) from Mus musculus (Mouse).